Reading from the N-terminus, the 108-residue chain is T cell receptor alpha variable 1-1 (108 aa).

An N-terminal signal peptide occupies residues Met1–Gly18. In terms of domain architecture, Ig-like spans Gln19–Arg108. An N-linked (GlcNAc...) asparagine glycan is attached at Asn38. Cys39 and Cys105 form a disulfide bridge.

In terms of assembly, alpha-beta TR is a heterodimer composed of an alpha and beta chain; disulfide-linked. The alpha-beta TR is associated with the transmembrane signaling CD3 coreceptor proteins to form the TR-CD3 (TcR or TCR). The assembly of alpha-beta TR heterodimers with CD3 occurs in the endoplasmic reticulum where a single alpha-beta TR heterodimer associates with one CD3D-CD3E heterodimer, one CD3G-CD3E heterodimer and one CD247 homodimer forming a stable octameric structure. CD3D-CD3E and CD3G-CD3E heterodimers preferentially associate with TR alpha and TR beta chains, respectively. The association of the CD247 homodimer is the last step of TcR assembly in the endoplasmic reticulum and is required for transport to the cell surface.

It is found in the cell membrane. Its function is as follows. V region of the variable domain of T cell receptor (TR) alpha chain that participates in the antigen recognition. Alpha-beta T cell receptors are antigen specific receptors which are essential to the immune response and are present on the cell surface of T lymphocytes. Recognize peptide-major histocompatibility (MH) (pMH) complexes that are displayed by antigen presenting cells (APC), a prerequisite for efficient T cell adaptive immunity against pathogens. Binding of alpha-beta TR to pMH complex initiates TR-CD3 clustering on the cell surface and intracellular activation of LCK that phosphorylates the ITAM motifs of CD3G, CD3D, CD3E and CD247 enabling the recruitment of ZAP70. In turn ZAP70 phosphorylates LAT, which recruits numerous signaling molecules to form the LAT signalosome. The LAT signalosome propagates signal branching to three major signaling pathways, the calcium, the mitogen-activated protein kinase (MAPK) kinase and the nuclear factor NF-kappa-B (NF-kB) pathways, leading to the mobilization of transcription factors that are critical for gene expression and essential for T cell growth and differentiation. The T cell repertoire is generated in the thymus, by V-(D)-J rearrangement. This repertoire is then shaped by intrathymic selection events to generate a peripheral T cell pool of self-MH restricted, non-autoaggressive T cells. Post-thymic interaction of alpha-beta TR with the pMH complexes shapes TR structural and functional avidity. The protein is T cell receptor alpha variable 1-1 of Homo sapiens (Human).